A 233-amino-acid polypeptide reads, in one-letter code: Movement and silencing protein TGBp1 (233 aa).

The (+)RNA virus helicase ATP-binding domain maps to 1-133; that stretch reads MNHFINLLVA…CKLLSSLGIK (133 aa). In terms of domain architecture, (+)RNA virus helicase C-terminal spans 134–233; the sequence is VESHRRDRDV…EFPHTTSRPQ (100 aa).

This sequence belongs to the Tymovirales TGBp1 protein family. As to quaternary structure, homodimer and homooligomer. Interacts with capsid protein. Interacts with host AGO1; this interaction targets the host protein for degradation, thereby suppressing the antiviral RNA silencing.

Its subcellular location is the host cytoplasm. Its function is as follows. Transports viral genome to neighboring plant cells directly through plasmosdesmata, without any budding. The movement protein allows efficient cell to cell propagation, by bypassing the host cell wall barrier. Increases plasmodesma size exclusion limit. Acts as a suppressor of RNA-mediated gene silencing, also known as post-transcriptional gene silencing (PTGS), a mechanism of plant viral defense that limits the accumulation of viral RNAs. This is Movement and silencing protein TGBp1 from Carica papaya (Papaya).